The following is a 105-amino-acid chain: N(4)-acetylcytidine amidohydrolase (105 aa).

The ASCH domain occupies 7-93 (TFFERFEHDI…VIAEIYPGLE (87 aa)). K21 acts as the Proton acceptor in catalysis. T24 serves as the catalytic Nucleophile. The active-site Proton donor is E74.

It belongs to the N(4)-acetylcytidine amidohydrolase family.

The catalysed reaction is N(4)-acetylcytidine + H2O = cytidine + acetate + H(+). The enzyme catalyses N(4)-acetyl-2'-deoxycytidine + H2O = 2'-deoxycytidine + acetate + H(+). It catalyses the reaction N(4)-acetylcytosine + H2O = cytosine + acetate + H(+). Catalyzes the hydrolysis of N(4)-acetylcytidine (ac4C). In Shewanella baltica (strain OS155 / ATCC BAA-1091), this protein is N(4)-acetylcytidine amidohydrolase.